We begin with the raw amino-acid sequence, 347 residues long: WAT1-related protein At4g15540 (347 aa).

10 consecutive transmembrane segments (helical) span residues 15–35 (VVPF…SILY), 47–67 (VFVF…SLIF), 73–93 (LPTA…LGLT), 108–128 (TLSS…AIFF), 139–159 (ATQA…VIVL), 178–198 (WIIG…WFIL), 210–230 (IAVV…VCLL), 243–263 (GFSL…GSVI), 276–296 (ISLF…IFLG), and 299–319 (LHLG…TVIW). In terms of domain architecture, EamA 1 spans 30 to 158 (GSSILYKAAT…VSISGALVIV (129 aa)). In terms of domain architecture, EamA 2 spans 216–317 (YNLCATLISG…VILSFGFYTV (102 aa)).

The protein belongs to the drug/metabolite transporter (DMT) superfamily. Plant drug/metabolite exporter (P-DME) (TC 2.A.7.4) family.

It localises to the membrane. The chain is WAT1-related protein At4g15540 from Arabidopsis thaliana (Mouse-ear cress).